Here is a 452-residue protein sequence, read N- to C-terminus: NADH-ubiquinone oxidoreductase chain 4 (452 aa).

14 helical membrane-spanning segments follow: residues 4–24 (LVLG…SMVW), 29–49 (VGSV…MTIS), 59–79 (FVSL…LLAS), 88–110 (LIYQ…LAFM), 114–136 (LLLF…TRWG), 144–164 (AGTY…ICLI), 182–202 (VFQL…AFLV), 221–241 (PIAG…YGMM), 252–272 (MLSS…MGGI), 282–304 (LIAY…GVAW), 309–331 (AMVL…NLWY), 345–365 (LIMI…MNMA), 390–410 (IVYM…LFGM), and 432–452 (LLTT…GLMF).

It belongs to the complex I subunit 4 family.

The protein resides in the mitochondrion membrane. It carries out the reaction a ubiquinone + NADH + 5 H(+)(in) = a ubiquinol + NAD(+) + 4 H(+)(out). Core subunit of the mitochondrial membrane respiratory chain NADH dehydrogenase (Complex I) that is believed to belong to the minimal assembly required for catalysis. Complex I functions in the transfer of electrons from NADH to the respiratory chain. The immediate electron acceptor for the enzyme is believed to be ubiquinone. This Branchiostoma floridae (Florida lancelet) protein is NADH-ubiquinone oxidoreductase chain 4 (ND4).